The sequence spans 328 residues: Cell division protein ZipA (328 aa).

Topologically, residues 1–4 (MDLN) are periplasmic. The helical transmembrane segment at 5-25 (TILIIVGIVALVALIVHGLWS) threads the bilayer. At 26–328 (NRREKSKYFD…NAEQAYLARV (303 aa)) the chain is on the cytoplasmic side. Positions 43–82 (TSLTSRSHTQEEMAQPNNISPNTYVENGHTPIPQPTTEKV) are disordered. Polar residues predominate over residues 57 to 67 (QPNNISPNTYV).

It belongs to the ZipA family. In terms of assembly, interacts with FtsZ via their C-terminal domains.

It is found in the cell inner membrane. Essential cell division protein that stabilizes the FtsZ protofilaments by cross-linking them and that serves as a cytoplasmic membrane anchor for the Z ring. Also required for the recruitment to the septal ring of downstream cell division proteins. This is Cell division protein ZipA from Haemophilus influenzae (strain PittEE).